Consider the following 1530-residue polypeptide: Multidrug resistance-associated protein 1 (1530 aa).

The Extracellular portion of the chain corresponds to Met-1–Phe-33. N-linked (GlcNAc...) asparagine glycosylation is present at Asn-19. Residues Gln-34–Phe-54 form a helical membrane-spanning segment. Over Leu-55–Lys-74 the chain is Cytoplasmic. A helical transmembrane segment spans residues Thr-75–Glu-95. At Arg-96 to Lys-100 the chain is on the extracellular side. The helical transmembrane segment at Leu-101–Thr-121 threads the bilayer. Over Phe-122–Gln-133 the chain is Cytoplasmic. The chain crosses the membrane as a helical span at residues Ser-134 to Arg-154. Over Ser-155 to Asp-172 the chain is Extracellular. The helical transmembrane segment at Val-173–Asp-193 threads the bilayer. Residues Arg-194–Val-316 are Cytoplasmic-facing. Tyr-277 is subject to Phosphotyrosine. Residue Ser-289 is modified to Phosphoserine. The helical transmembrane segment at Leu-317–Leu-337 threads the bilayer. The ABC transmembrane type-1 1 domain maps to Phe-325–Gln-608. The Extracellular segment spans residues Met-338–Gly-363. A helical transmembrane segment spans residues Tyr-364 to Tyr-384. Residues Phe-385 to Tyr-440 are Cytoplasmic-facing. Residues Ile-441–Asn-461 form a helical membrane-spanning segment. The Extracellular portion of the chain corresponds to Leu-462–Pro-464. A helical transmembrane segment spans residues Ser-465 to Met-485. Residues Lys-486–Ala-547 lie on the Cytoplasmic side of the membrane. Lys-503 carries the post-translational modification N6-succinyllysine. A helical transmembrane segment spans residues Val-548 to Tyr-568. The Extracellular portion of the chain corresponds to Val-569–Asn-590. Residues Ile-591 to Val-611 traverse the membrane as a helical segment. Over Ser-612–Met-966 the chain is Cytoplasmic. In terms of domain architecture, ABC transporter 1 spans Ile-644–Thr-868. Gly-678–Ser-685 contacts ATP. Residues Arg-912–Pro-939 are disordered. 2 positions are modified to phosphoserine: Ser-915 and Ser-930. A helical membrane pass occupies residues Lys-967 to Ala-987. One can recognise an ABC transmembrane type-1 2 domain in the interval Ser-974–Thr-1255. The Extracellular segment spans residues Ser-988 to Ser-1024. Residue Asn-1005 is glycosylated (N-linked (GlcNAc...) asparagine). A helical transmembrane segment spans residues Gln-1025 to Arg-1045. Residues Arg-1046–Gln-1088 are Cytoplasmic-facing. A helical transmembrane segment spans residues Val-1089 to Leu-1109. Ala-1110 is a topological domain (extracellular). A helical membrane pass occupies residues Thr-1111–Phe-1131. Residues Tyr-1132–Leu-1202 lie on the Cytoplasmic side of the membrane. The helical transmembrane segment at Glu-1203–Ser-1223 threads the bilayer. The Extracellular segment spans residues Leu-1224–Ser-1225. A helical transmembrane segment spans residues Ala-1226–Leu-1246. At Val-1247–Val-1530 the chain is on the cytoplasmic side. The region spanning Val-1292–Asp-1526 is the ABC transporter 2 domain. An ATP-binding site is contributed by Gly-1326–Ser-1333.

The protein belongs to the ABC transporter superfamily. ABCC family. Conjugate transporter (TC 3.A.1.208) subfamily. As to expression, expressed in heart, spleen, lung, kidney, skeletal muscle, mammary gland and weaker in brain and liver.

The protein resides in the cell membrane. The protein localises to the basolateral cell membrane. The enzyme catalyses ATP + H2O + xenobioticSide 1 = ADP + phosphate + xenobioticSide 2.. It carries out the reaction an S-substituted glutathione(in) + ATP + H2O = an S-substituted glutathione(out) + ADP + phosphate + H(+). It catalyses the reaction sphing-4-enine 1-phosphate(in) + ATP + H2O = sphing-4-enine 1-phosphate(out) + ADP + phosphate + H(+). The catalysed reaction is leukotriene C4(in) + ATP + H2O = leukotriene C4(out) + ADP + phosphate + H(+). The enzyme catalyses 17beta-estradiol 17-O-(beta-D-glucuronate)(in) + ATP + H2O = 17beta-estradiol 17-O-(beta-D-glucuronate)(out) + ADP + phosphate + H(+). It carries out the reaction daunorubicin(in) + ATP + H2O = daunorubicin(out) + ADP + phosphate + H(+). It catalyses the reaction vincristine(in) + ATP + H2O = vincristine(out) + ADP + phosphate + H(+). The catalysed reaction is 2',3'-cGAMP(in) + ATP + H2O = 2',3'-cGAMP(out) + ADP + phosphate + H(+). The enzyme catalyses S-[(2E,6E,10E)-geranylgeranyl]-L-glutathione(in) + ATP + H2O = S-[(2E,6E,10E)-geranylgeranyl]-L-glutathione(out) + ADP + phosphate + H(+). It carries out the reaction prostaglandin A2-S-(R)-glutathione(in) + ATP + H2O = prostaglandin A2-S-(R)-glutathione(out) + ADP + phosphate + H(+). It catalyses the reaction prostaglandin A2-S-(S)-glutathione(in) + ATP + H2O = prostaglandin A2-S-(S)-glutathione(out) + ADP + phosphate + H(+). With respect to regulation, MK 571 inhibits sphingosine 1-phosphate and leukotriene C4 export. Functionally, mediates export of organic anions and drugs from the cytoplasm. Mediates ATP-dependent transport of glutathione and glutathione conjugates, leukotriene C4, estradiol-17-beta-o-glucuronide, methotrexate, antiviral drugs and other xenobiotics. Confers resistance to anticancer drugs by decreasing accumulation of drug in cells, and by mediating ATP- and GSH-dependent drug export. Hydrolyzes ATP with low efficiency. Catalyzes the export of sphingosine 1-phosphate from mast cells independently of their degranulation. Participates in inflammatory response by allowing export of leukotriene C4 from leukotriene C4-synthesizing cells. Mediates ATP-dependent, GSH-independent cyclic GMP-AMP (cGAMP) export. Thus, by limiting intracellular cGAMP concentrations negatively regulates the cGAS-STING pathway. Exports S-geranylgeranyl-glutathione (GGG) in lymphoid cells and stromal compartments of lymphoid organs. ABCC1 (via extracellular transport) with GGT5 (via GGG catabolism) establish GGG gradients within lymphoid tissues to position P2RY8-positive lymphocytes at germinal centers in lymphoid follicles and restrict their chemotactic transmigration from blood vessels to the bone marrow parenchyma. Mediates basolateral export of GSH-conjugated R- and S-prostaglandin A2 diastereomers in polarized epithelial cells. In Bos taurus (Bovine), this protein is Multidrug resistance-associated protein 1.